The chain runs to 75 residues: Probable pilin MJ1469 (75 aa).

The propeptide occupies 1-11; it reads MKPKKIISNKA. The QXSXEXXXL motif lies at 12 to 20; the sequence is QISLELALL.

Post-translationally, the N-terminus is cleaved by the prepilin peptidase EppA, which recognizes the class III signal sequence.

It localises to the secreted. Its subcellular location is the cell surface. The protein localises to the fimbrium. In Methanocaldococcus jannaschii (strain ATCC 43067 / DSM 2661 / JAL-1 / JCM 10045 / NBRC 100440) (Methanococcus jannaschii), this protein is Probable pilin MJ1469.